The chain runs to 770 residues: Pyrophosphate-energized vacuolar membrane proton pump 1 (770 aa).

The Intravacuolar portion of the chain corresponds to 1 to 9 (MVAPALLPE). Residues 10–36 (LWTEILVPICAVIGIAFSLFQWYVVSR) form a helical membrane-spanning segment. The Cytoplasmic segment spans residues 37–88 (VKLTSDLGASSSGGANNGKNGYGDYLIEEEEGVNDQSVVAKCAEIQTAISEG). Residues 89-118 (ATSFLFTEYKYVGVFMIFFAAVIFVFLGSV) traverse the membrane as a helical segment. Residues 119 to 139 (EGFSTDNKPCTYDTTRTCKPA) lie on the Intravacuolar side of the membrane. An intrachain disulfide couples C128 to C136. The helical transmembrane segment at 140–167 (LATAAFSTIAFVLGAVTSVLSGFLGMKI) threads the bilayer. Residues 168 to 190 (ATYANARTTLEARKGVGKAFIVA) lie on the Cytoplasmic side of the membrane. The helical transmembrane segment at 191-220 (FRSGAVMGFLLAASGLLVLYITINVFKIYY) threads the bilayer. Residues 221–223 (GDD) are Intravacuolar-facing. A helical membrane pass occupies residues 224 to 252 (WEGLFEAITGYGLGGSSMALFGRVGGGIY). At 253–290 (TKAADVGADLVGKIERNIPEDDPRNPAVIADNVGDNVG) the chain is on the cytoplasmic side. K254 is a substrate binding site. Mg(2+) contacts are provided by D257, D261, and D287. A helical membrane pass occupies residues 291–316 (DIAGMGSDLFGSYAEASCAALVVASI). Over 317–324 (SSFGINHD) the chain is Intravacuolar. The chain crosses the membrane as a helical span at residues 325 to 350 (FTAMCYPLLISSMGILVCLITTLFAT). Residues 351-358 (DFFEIKLV) lie on the Cytoplasmic side of the membrane. Residues 359-386 (KEIEPALKNQLIISTVIMTVGIAIVSWV) traverse the membrane as a helical segment. The Intravacuolar portion of the chain corresponds to 387–405 (GLPTSFTIFNFGTQKVVKN). Residues 406-429 (WQLFLCVCVGLWAGLIIGFVTEYY) form a helical membrane-spanning segment. At 430-451 (TSNAYSPVQDVADSCRTGAATN) the chain is on the cytoplasmic side. The helical transmembrane segment at 452–476 (VIFGLALGYKSVIIPIFAIAISIFV) threads the bilayer. At 477-482 (SFSFAA) the chain is on the intravacuolar side. Residues 483 to 509 (MYGVAVAALGMLSTIATGLAIDAYGPI) form a helical membrane-spanning segment. The Cytoplasmic portion of the chain corresponds to 510–538 (SDNAGGIAEMAGMSHRIRERTDALDAAGN). The Mg(2+) site is built by D511 and N538. The helical transmembrane segment at 539–567 (TTAAIGKGFAIGSAALVSLALFGAFVSRA) threads the bilayer. The Intravacuolar portion of the chain corresponds to 568-577 (GIHTVDVLTP). A helical membrane pass occupies residues 578-606 (KVIIGLLVGAMLPYWFSAMTMKSVGSAAL). Over 607–635 (KMVEEVRRQFNTIPGLMEGTAKPDYATCV) the chain is Cytoplasmic. The helical transmembrane segment at 636 to 664 (KISTDASIKEMIPPGCLVMLTPLIVGFFF) threads the bilayer. Residue G665 is a topological domain, intravacuolar. Residues 666–693 (VETLSGVLAGSLVSGVQIAISASNTGGA) form a helical membrane-spanning segment. Residues 694–736 (WDNAKKYIEAGVSEHAKSLGPKGSEPHKAAVIGDTIGDPLKDT) lie on the Cytoplasmic side of the membrane. 2 residues coordinate Mg(2+): D695 and D731. K734 contacts substrate. A helical membrane pass occupies residues 737 to 762 (SGPSLNILIKLMAVESLVFAPFFATH). The Intravacuolar portion of the chain corresponds to 763–770 (GGILFKYF).

Belongs to the H(+)-translocating pyrophosphatase (TC 3.A.10) family. K(+)-stimulated subfamily. In terms of assembly, monomer. Ubiquitous (at protein level). Mostly expressed in vascular tissues, meristems and root pericycle.

The protein resides in the vacuole membrane. It is found in the endosome membrane. It localises to the cell membrane. The catalysed reaction is diphosphate + H2O + H(+)(in) = 2 phosphate + 2 H(+)(out). Its activity is regulated as follows. Activated by K(+) and Mg(2+). Inhibited by Ca(2+), N,N'-dicyclohexylcarbodiimide (DCCD), N-ethylmaleimide (NEM) and aminomethylenediphosphonate (AMDP), and, to a lower extent, by fluoride (KF). Functionally, contributes to the transtonoplast (from cytosol to vacuole lumen) H(+)-electrochemical potential difference. It establishes a proton gradient of similar and often greater magnitude than the H(+)-ATPase on the same membrane. In addition, facilitates auxin transport by modulating apoplastic pH and regulates auxin-mediated developmental processes. Confers tolerance to NaCl and to drought by increasing ion retention. This Arabidopsis thaliana (Mouse-ear cress) protein is Pyrophosphate-energized vacuolar membrane proton pump 1 (AVP1).